The following is a 638-amino-acid chain: Gamma-aminobutyric acid receptor subunit theta (638 aa).

The N-terminal stretch at 1–21 is a signal peptide; sequence MGIRGMLRAAALLLLIRTWLA. At 22-267 the chain is on the extracellular side; it reads ESNGPSPTPK…FQVQREVRSY (246 aa). N127 is a glycosylation site (N-linked (GlcNAc...) asparagine). C183 and C197 form a disulfide bridge. The chain crosses the membrane as a helical span at residues 268-288; that stretch reads LVQVYWPTVLTTILSWISFWM. Residues 289–296 lie on the Cytoplasmic side of the membrane; that stretch reads NYDSSAAR. Residues 297–314 traverse the membrane as a helical segment; sequence VTIGLTSILVLTTIDSHM. Over 315-325 the chain is Extracellular; it reads RDKLPHISCIK. A helical transmembrane segment spans residues 326–346; sequence AIDIYILVCLFFVFLSLLEYV. The Cytoplasmic segment spans residues 347–617; sequence YINYLFFSQV…NRVPKVDRWS (271 aa). A disordered region spans residues 491 to 515; the sequence is ACDDEDSEESLSSEESHGHGSSHTG. Residues 492–502 are compositionally biased toward acidic residues; it reads CDDEDSEESLS. A helical transmembrane segment spans residues 618 to 638; sequence RFLFPLSFGLFNVVYWLYHVY.

It belongs to the ligand-gated ion channel (TC 1.A.9) family. Gamma-aminobutyric acid receptor (TC 1.A.9.5) subfamily. GABRQ sub-subfamily. As to quaternary structure, heteropentamer, formed by a combination of alpha (GABRA1-6), beta (GABRB1-3), gamma (GABRG1-3), delta (GABRD), epsilon (GABRE), rho (GABRR1-3), pi (GABRP) and theta (GABRQ) chains, each subunit exhibiting distinct physiological and pharmacological properties. Expressed in brain, lung, and spleen.

Its subcellular location is the postsynaptic cell membrane. It is found in the cell membrane. The catalysed reaction is chloride(in) = chloride(out). Potentiated by etomidate, propofol, pregnanolone and pentobarbital. In terms of biological role, theta subunit of the heteropentameric ligand-gated chloride channel gated by gamma-aminobutyric acid (GABA), a major inhibitory neurotransmitter in the brain. GABA-gated chloride channels, also named GABA(A) receptors (GABAAR), consist of five subunits arranged around a central pore and contain GABA active binding site(s) located at the alpha and beta subunit interfaces. When activated by GABA, GABAARs selectively allow the flow of chloride anions across the cell membrane down their electrochemical gradient. This Mus musculus (Mouse) protein is Gamma-aminobutyric acid receptor subunit theta.